The following is a 122-amino-acid chain: Large ribosomal subunit protein uL18 (122 aa).

This sequence belongs to the universal ribosomal protein uL18 family. As to quaternary structure, part of the 50S ribosomal subunit; part of the 5S rRNA/L5/L18/L25 subcomplex. Contacts the 5S and 23S rRNAs.

Its function is as follows. This is one of the proteins that bind and probably mediate the attachment of the 5S RNA into the large ribosomal subunit, where it forms part of the central protuberance. This is Large ribosomal subunit protein uL18 from Lachnoclostridium phytofermentans (strain ATCC 700394 / DSM 18823 / ISDg) (Clostridium phytofermentans).